Consider the following 243-residue polypeptide: Transcription factor TCP6 (243 aa).

Residues 1–55 (MVMEPKKNQNLPSFLNPSRQNQDNDKKRKQTEVKGFDIVVGEKRKKKENEEEDQE) form a disordered region. The segment covering 8–21 (NQNLPSFLNPSRQN) has biased composition (polar residues). Basic and acidic residues predominate over residues 22–35 (QDNDKKRKQTEVKG). Positions 42 to 66 (EKRKKKENEEEDQEIQILYEKEKKK) form a coiled coil. Residues 68 to 122 (NKDRHLKVEGRGRRVRLPPLCAARIYQLTKELGHKSDGETLEWLLQHAEPSILSA) form the TCP domain.

As to quaternary structure, interacts with SPL.

Its subcellular location is the nucleus. In Arabidopsis thaliana (Mouse-ear cress), this protein is Transcription factor TCP6 (TCP6).